The sequence spans 299 residues: MKPDAHQVKQFLLNLQDTICQQLTAVDGAEFVEDSWQREAGGGGRSRVLRNGGVFEQAGVNFSHVHGEAMPASATAHRPELAGRSFEAMGVSLVVHPHNPYVPTSHANVRFFIAEKPGAEPVWWFGGGFDLTPFYGFEEDAIHWHRTARDLCLPFGEDVYPRYKKWCDDYFYLKHRNEQRGIGGLFFDDLNTPDFDHCFAFMQAVGKGYTDAYLPIVERRKAMAYGERERNFQLYRRGRYVEFNLVWDRGTLFGLQTGGRTESILMSMPPLVRWEYDYQPKDGSPEAALSEFIKVRDWV.

Substrate is bound at residue serine 92. Positions 96 and 106 each coordinate Mn(2+). Histidine 106 functions as the Proton donor in the catalytic mechanism. Residue 108–110 (NVR) coordinates substrate. Residues histidine 145 and histidine 175 each coordinate Mn(2+). The interval 240–275 (YVEFNLVWDRGTLFGLQTGGRTESILMSMPPLVRWE) is important for dimerization. 258–260 (GGR) contacts substrate.

Belongs to the aerobic coproporphyrinogen-III oxidase family. In terms of assembly, homodimer. The cofactor is Mn(2+).

Its subcellular location is the cytoplasm. The enzyme catalyses coproporphyrinogen III + O2 + 2 H(+) = protoporphyrinogen IX + 2 CO2 + 2 H2O. The protein operates within porphyrin-containing compound metabolism; protoporphyrin-IX biosynthesis; protoporphyrinogen-IX from coproporphyrinogen-III (O2 route): step 1/1. Functionally, involved in the heme biosynthesis. Catalyzes the aerobic oxidative decarboxylation of propionate groups of rings A and B of coproporphyrinogen-III to yield the vinyl groups in protoporphyrinogen-IX. In Escherichia coli O8 (strain IAI1), this protein is Oxygen-dependent coproporphyrinogen-III oxidase.